The following is a 132-amino-acid chain: MDSRTGEFITVHQAENGVYIWEIANPLYFRIYKVEDPLYTRTRIYHVQIRFNHNLRRALHLHKAYLNFQVWTTSMTASGSIYLNRFRRLVNMYLDQLGVISINNVIRAVQFATNRTYVNYVLENHSIKFKFY.

This sequence belongs to the geminiviridae replication enhancer protein family. In terms of assembly, homooligomer. Interacts with the replication-associated protein (REP). Interacts with host proliferating cell nuclear antigen (PCNA). Interacts with host retinoblastoma-related protein 1 (RBR1), and may thereby deregulate the host cell cycle. Oligomerization and interaction with PCNA are necessary for optimal replication enhancement.

Its function is as follows. Increases viral DNA accumulation. Enhances infectivity and symptom expression. This is Replication enhancer protein from Abutilon (Upland cotton).